A 201-amino-acid polypeptide reads, in one-letter code: Oligoribonuclease (201 aa).

An Exonuclease domain is found at 20 to 183 (LVWLDMEMTG…ADIHESIDEL (164 aa)). Residue tyrosine 141 is part of the active site.

The protein belongs to the oligoribonuclease family.

The protein resides in the cytoplasm. In terms of biological role, 3'-to-5' exoribonuclease specific for small oligoribonucleotides. The polypeptide is Oligoribonuclease (Burkholderia mallei (strain NCTC 10229)).